The chain runs to 212 residues: Uridine kinase (212 aa).

13-20 (GASASGKS) is a binding site for ATP.

Belongs to the uridine kinase family.

It localises to the cytoplasm. It carries out the reaction uridine + ATP = UMP + ADP + H(+). The catalysed reaction is cytidine + ATP = CMP + ADP + H(+). The protein operates within pyrimidine metabolism; CTP biosynthesis via salvage pathway; CTP from cytidine: step 1/3. It functions in the pathway pyrimidine metabolism; UMP biosynthesis via salvage pathway; UMP from uridine: step 1/1. The sequence is that of Uridine kinase from Shewanella baltica (strain OS155 / ATCC BAA-1091).